The primary structure comprises 356 residues: Protein MGF 360-3L (356 aa).

One copy of the ANK repeat lies at 61-93 (KLNTALVLAVKENNEDLIMLFTEWGANINYGLL).

This sequence belongs to the asfivirus MGF 360 family.

Functionally, plays a role in virus cell tropism, and may be required for efficient virus replication in macrophages. The polypeptide is Protein MGF 360-3L (African swine fever virus (strain Badajoz 1971 Vero-adapted) (Ba71V)).